Consider the following 219-residue polypeptide: Ribose-5-phosphate isomerase A (219 aa).

Residues 28 to 31 (TGST), 81 to 84 (DGAD), and 94 to 97 (KGGG) contribute to the substrate site. The Proton acceptor role is filled by E103. K121 is a substrate binding site.

This sequence belongs to the ribose 5-phosphate isomerase family. Homodimer.

It catalyses the reaction aldehydo-D-ribose 5-phosphate = D-ribulose 5-phosphate. Its pathway is carbohydrate degradation; pentose phosphate pathway; D-ribose 5-phosphate from D-ribulose 5-phosphate (non-oxidative stage): step 1/1. Catalyzes the reversible conversion of ribose-5-phosphate to ribulose 5-phosphate. The chain is Ribose-5-phosphate isomerase A from Shewanella sp. (strain ANA-3).